We begin with the raw amino-acid sequence, 89 residues long: Small ribosomal subunit protein uS15 (89 aa).

It belongs to the universal ribosomal protein uS15 family. Part of the 30S ribosomal subunit. Forms a bridge to the 50S subunit in the 70S ribosome, contacting the 23S rRNA.

In terms of biological role, one of the primary rRNA binding proteins, it binds directly to 16S rRNA where it helps nucleate assembly of the platform of the 30S subunit by binding and bridging several RNA helices of the 16S rRNA. Functionally, forms an intersubunit bridge (bridge B4) with the 23S rRNA of the 50S subunit in the ribosome. The sequence is that of Small ribosomal subunit protein uS15 from Polynucleobacter asymbioticus (strain DSM 18221 / CIP 109841 / QLW-P1DMWA-1) (Polynucleobacter necessarius subsp. asymbioticus).